Here is a 232-residue protein sequence, read N- to C-terminus: 5'-methylthioadenosine/S-adenosylhomocysteine nucleosidase (232 aa).

Glu12 acts as the Proton acceptor in catalysis. Residues Gly78, Ile152, and Met173–Glu174 each bind substrate. Catalysis depends on Asp197, which acts as the Proton donor.

The protein belongs to the PNP/UDP phosphorylase family. MtnN subfamily. As to quaternary structure, homodimer.

It carries out the reaction S-adenosyl-L-homocysteine + H2O = S-(5-deoxy-D-ribos-5-yl)-L-homocysteine + adenine. It catalyses the reaction S-methyl-5'-thioadenosine + H2O = 5-(methylsulfanyl)-D-ribose + adenine. The enzyme catalyses 5'-deoxyadenosine + H2O = 5-deoxy-D-ribose + adenine. The protein operates within amino-acid biosynthesis; L-methionine biosynthesis via salvage pathway; S-methyl-5-thio-alpha-D-ribose 1-phosphate from S-methyl-5'-thioadenosine (hydrolase route): step 1/2. Its function is as follows. Catalyzes the irreversible cleavage of the glycosidic bond in both 5'-methylthioadenosine (MTA) and S-adenosylhomocysteine (SAH/AdoHcy) to adenine and the corresponding thioribose, 5'-methylthioribose and S-ribosylhomocysteine, respectively. Also cleaves 5'-deoxyadenosine, a toxic by-product of radical S-adenosylmethionine (SAM) enzymes, into 5-deoxyribose and adenine. Thus, is required for in vivo function of the radical SAM enzymes biotin synthase and lipoic acid synthase, that are inhibited by 5'-deoxyadenosine accumulation. This is 5'-methylthioadenosine/S-adenosylhomocysteine nucleosidase from Salmonella enteritidis PT4 (strain P125109).